We begin with the raw amino-acid sequence, 314 residues long: Pantothenate kinase (314 aa).

93-100 contributes to the ATP binding site; it reads GSVAVGKS.

Belongs to the prokaryotic pantothenate kinase family.

It localises to the cytoplasm. It carries out the reaction (R)-pantothenate + ATP = (R)-4'-phosphopantothenate + ADP + H(+). Its pathway is cofactor biosynthesis; coenzyme A biosynthesis; CoA from (R)-pantothenate: step 1/5. The protein is Pantothenate kinase of Shewanella denitrificans (strain OS217 / ATCC BAA-1090 / DSM 15013).